We begin with the raw amino-acid sequence, 392 residues long: Chaperone protein DnaJ (392 aa).

The region spanning 2–67 (DYYDVLGVSK…QKRESYDRYG (66 aa)) is the J domain. Residues 149–227 (GVEKELLVSG…CRGQGRIKDK (79 aa)) form a CR-type zinc finger. Positions 162, 165, 179, 182, 201, 204, 215, and 218 each coordinate Zn(2+). 4 CXXCXGXG motif repeats span residues 162–169 (CETCLGSG), 179–186 (CDRCKGSG), 201–208 (CPECGGEG), and 215–222 (CSNCRGQG).

It belongs to the DnaJ family. As to quaternary structure, homodimer. It depends on Zn(2+) as a cofactor.

It is found in the cytoplasm. In terms of biological role, participates actively in the response to hyperosmotic and heat shock by preventing the aggregation of stress-denatured proteins and by disaggregating proteins, also in an autonomous, DnaK-independent fashion. Unfolded proteins bind initially to DnaJ; upon interaction with the DnaJ-bound protein, DnaK hydrolyzes its bound ATP, resulting in the formation of a stable complex. GrpE releases ADP from DnaK; ATP binding to DnaK triggers the release of the substrate protein, thus completing the reaction cycle. Several rounds of ATP-dependent interactions between DnaJ, DnaK and GrpE are required for fully efficient folding. Also involved, together with DnaK and GrpE, in the DNA replication of plasmids through activation of initiation proteins. In Chlamydia caviae (strain ATCC VR-813 / DSM 19441 / 03DC25 / GPIC) (Chlamydophila caviae), this protein is Chaperone protein DnaJ.